We begin with the raw amino-acid sequence, 230 residues long: Large ribosomal subunit protein uL1 (230 aa).

This sequence belongs to the universal ribosomal protein uL1 family. In terms of assembly, part of the 50S ribosomal subunit.

Its function is as follows. Binds directly to 23S rRNA. The L1 stalk is quite mobile in the ribosome, and is involved in E site tRNA release. In terms of biological role, protein L1 is also a translational repressor protein, it controls the translation of the L11 operon by binding to its mRNA. In Ligilactobacillus salivarius (strain UCC118) (Lactobacillus salivarius), this protein is Large ribosomal subunit protein uL1.